A 361-amino-acid chain; its full sequence is Phosphoserine aminotransferase (361 aa).

Residue R43 coordinates L-glutamate. Pyridoxal 5'-phosphate is bound by residues 77 to 78 (AS), W103, T153, D173, and Q196. At K197 the chain carries N6-(pyridoxal phosphate)lysine. 238 to 239 (NT) serves as a coordination point for pyridoxal 5'-phosphate.

This sequence belongs to the class-V pyridoxal-phosphate-dependent aminotransferase family. SerC subfamily. In terms of assembly, homodimer. Pyridoxal 5'-phosphate is required as a cofactor.

It is found in the cytoplasm. The enzyme catalyses O-phospho-L-serine + 2-oxoglutarate = 3-phosphooxypyruvate + L-glutamate. The catalysed reaction is 4-(phosphooxy)-L-threonine + 2-oxoglutarate = (R)-3-hydroxy-2-oxo-4-phosphooxybutanoate + L-glutamate. It functions in the pathway amino-acid biosynthesis; L-serine biosynthesis; L-serine from 3-phospho-D-glycerate: step 2/3. The protein operates within cofactor biosynthesis; pyridoxine 5'-phosphate biosynthesis; pyridoxine 5'-phosphate from D-erythrose 4-phosphate: step 3/5. Functionally, catalyzes the reversible conversion of 3-phosphohydroxypyruvate to phosphoserine and of 3-hydroxy-2-oxo-4-phosphonooxybutanoate to phosphohydroxythreonine. This is Phosphoserine aminotransferase from Pseudomonas fluorescens (strain SBW25).